Reading from the N-terminus, the 287-residue chain is Protoheme IX farnesyltransferase (287 aa).

7 helical membrane passes run 19-39 (LMVA…VTIT), 100-120 (MVLC…IVAV), 134-154 (FALL…WLAV), 162-182 (MLVV…WLHA), 212-232 (VWFH…LLEW), 233-253 (VGMR…AMLA), and 267-287 (VLCA…VSLF).

Belongs to the UbiA prenyltransferase family. Protoheme IX farnesyltransferase subfamily.

It localises to the cell inner membrane. It carries out the reaction heme b + (2E,6E)-farnesyl diphosphate + H2O = Fe(II)-heme o + diphosphate. It participates in porphyrin-containing compound metabolism; heme O biosynthesis; heme O from protoheme: step 1/1. Its function is as follows. Converts heme B (protoheme IX) to heme O by substitution of the vinyl group on carbon 2 of heme B porphyrin ring with a hydroxyethyl farnesyl side group. This is Protoheme IX farnesyltransferase from Nitratidesulfovibrio vulgaris (strain ATCC 29579 / DSM 644 / CCUG 34227 / NCIMB 8303 / VKM B-1760 / Hildenborough) (Desulfovibrio vulgaris).